The primary structure comprises 625 residues: 1,4-alpha-glucan branching enzyme GlgB (625 aa).

Aspartate 302 acts as the Nucleophile in catalysis. Glutamate 355 functions as the Proton donor in the catalytic mechanism.

The protein belongs to the glycosyl hydrolase 13 family. GlgB subfamily. Monomer.

The catalysed reaction is Transfers a segment of a (1-&gt;4)-alpha-D-glucan chain to a primary hydroxy group in a similar glucan chain.. It participates in glycan biosynthesis; glycogen biosynthesis. Its function is as follows. Catalyzes the formation of the alpha-1,6-glucosidic linkages in glycogen by scission of a 1,4-alpha-linked oligosaccharide from growing alpha-1,4-glucan chains and the subsequent attachment of the oligosaccharide to the alpha-1,6 position. This Albidiferax ferrireducens (strain ATCC BAA-621 / DSM 15236 / T118) (Rhodoferax ferrireducens) protein is 1,4-alpha-glucan branching enzyme GlgB.